The following is a 164-amino-acid chain: MRCPKCNYNKSSVVDSRQAEDGNTIRRRRECEKCHTRFTTFERLEELPLLVVKKDGTREQFSRDKILNGVVQSAQKRPVSSTDIENLISRIEQKVRANYENEVSSTAIGNLVMEELAELDEITYVRFASVYKSFKDVDEIEALLQQITNRVRGKKKSSIDDETH.

A zinc finger spans residues Cys-3 to Cys-34. The region spanning Leu-49–Glu-139 is the ATP-cone domain.

It belongs to the NrdR family. Requires Zn(2+) as cofactor.

In terms of biological role, negatively regulates transcription of bacterial ribonucleotide reductase nrd genes and operons by binding to NrdR-boxes. In Streptococcus uberis (strain ATCC BAA-854 / 0140J), this protein is Transcriptional repressor NrdR.